The following is a 75-amino-acid chain: Small ribosomal subunit protein bS18 (75 aa).

The protein belongs to the bacterial ribosomal protein bS18 family. As to quaternary structure, part of the 30S ribosomal subunit. Forms a tight heterodimer with protein bS6.

Binds as a heterodimer with protein bS6 to the central domain of the 16S rRNA, where it helps stabilize the platform of the 30S subunit. This chain is Small ribosomal subunit protein bS18, found in Glaesserella parasuis serovar 5 (strain SH0165) (Haemophilus parasuis).